An 886-amino-acid chain; its full sequence is Neurotrophin 1 (886 aa).

A signal peptide spans 1 to 29; the sequence is MKAGRAFGCLFWALLYCVLYLDLVSGNSA. Residues 30-498 constitute a propeptide that is removed on maturation; sequence DDELMDFDFA…FDDFSLSKKR (469 aa). N-linked (GlcNAc...) asparagine glycosylation is found at asparagine 267 and asparagine 317. Residues 321–340 form a disordered region; it reads FQQPSSQEEEKMASSNGGQS. The N-linked (GlcNAc...) asparagine glycan is linked to asparagine 353. The interval 369–436 is disordered; sequence RNSAEETEEP…HKPVVTPPNK (68 aa). One can recognise a Spaetzle domain in the interval 508 to 597; it reads MCQSVVRYAR…KVPTCCSCQV (90 aa). Intrachain disulfides connect cysteine 509–cysteine 564, cysteine 546–cysteine 593, and cysteine 553–cysteine 595. A glycan (N-linked (GlcNAc...) asparagine) is linked at asparagine 623. Disordered regions lie at residues 675–754 and 789–886; these read PGIS…QYHR and VSAP…QSIQ. Low complexity predominate over residues 698–710; that stretch reads YKSSSSSSKKYYS. A compositionally biased stretch (pro residues) spans 797-807; that stretch reads PAPPLPMPPMP. Composition is skewed to basic residues over residues 815–827 and 874–886; these read HQAHHQQPHHHLH and SRRHYHNRRQSIQ.

As to quaternary structure, homodimer; disulfide-linked. Detected in the fan-shaped body which is a component of the locomotion center in the central nervous system (CNS) (at protein level). Expressed in the optic lobes and brain.

Neurotrophin which may function as a ligand for the Toll-related receptors Toll-7 and Tollo. Binds to Toll-7 and probably acts as its ligand in promoting motor axon targeting and neuronal survival in the central nervous system (CNS). Involved in synaptic targeting of ISNb/d motorneurons and also some SNa motorneurons. In larvae, involved in the negative regulation of the tracheal immune response to bacterial infection perhaps by acting as a ligand for the Toll-related receptor Tollo. May be involved in the normal development of specific neurons at the neuromuscular junction. The polypeptide is Neurotrophin 1 (Drosophila melanogaster (Fruit fly)).